Reading from the N-terminus, the 230-residue chain is Large ribosomal subunit protein uL1 (230 aa).

Belongs to the universal ribosomal protein uL1 family. As to quaternary structure, part of the 50S ribosomal subunit.

Functionally, binds directly to 23S rRNA. The L1 stalk is quite mobile in the ribosome, and is involved in E site tRNA release. Its function is as follows. Protein L1 is also a translational repressor protein, it controls the translation of the L11 operon by binding to its mRNA. This Bradyrhizobium sp. (strain BTAi1 / ATCC BAA-1182) protein is Large ribosomal subunit protein uL1.